A 187-amino-acid polypeptide reads, in one-letter code: Cerebral dopamine neurotrophic factor (187 aa).

The N-terminal stretch at 1-24 is a signal peptide; it reads MRCISPTALVTFCAGFCISNPVLA. Intrachain disulfides connect cysteine 37-cysteine 124, cysteine 40-cysteine 113, and cysteine 71-cysteine 82.

It belongs to the ARMET family. As to expression, expressed at high levels in the heart, skeletal muscle, testis and brain (at protein level). In the brain, detected in the cerebral cortex neurons through layers II to VI. In the hippocampus, detected in the CA1 to CA3 pyramidal regions and in the granule and polymorph layers of dentate gyrus. Weak expression in the striatum. In substantia nigra, detected in solitary cells that did not express tyrosine hydroxylase, a marker for dopaminergic neurons. Relatively high expression in the Purkinje cells of the cerebellum and in regions of the brain stem, including the locus coeruleus.

It is found in the secreted. Trophic factor for dopamine neurons. Prevents the 6-hydroxydopamine (6-OHDA)-induced degeneration of dopaminergic neurons. When administered after 6-OHDA-lesioning, restores the dopaminergic function and prevents the degeneration of dopaminergic neurons in substantia nigra. The protein is Cerebral dopamine neurotrophic factor (Cdnf) of Mus musculus (Mouse).